A 434-amino-acid chain; its full sequence is Forkhead box protein A2 (434 aa).

A DNA-binding region (fork-head) is located at residues 149-243; the sequence is KPPYSYISLI…ENGCYLRRQK (95 aa). The span at 249-262 shows a compositional bias: basic and acidic residues; it reads KKPSLREGGGKKLS. The tract at residues 249–339 is disordered; sequence KKPSLREGGG…VLSHEAQSHL (91 aa). 2 stretches are compositionally biased toward low complexity: residues 263-291 and 317-333; these read EGSSSVGSAANSSSESSVGNESPHSSSSP and ASQAQHLLSQHHSVLSH.

The protein localises to the nucleus. In terms of biological role, acts as a transcriptional activator during early development, limiting the extent of mesoderm formation in the gastrula. Binds to DNA via the target sequence 5'-GT[AC]AACA-3', with 5'-GTAAACA-3' being the preferred binding site. The sequence is that of Forkhead box protein A2 from Xenopus tropicalis (Western clawed frog).